The sequence spans 413 residues: NPL4-like protein 2 (413 aa).

Ser104 is subject to Phosphoserine. Residues 131 to 272 (SVSFDRDAAN…ADVHFEAFQM (142 aa)) form the MPN domain.

This sequence belongs to the NPL4 family.

It functions in the pathway protein degradation; proteasomal ubiquitin-dependent pathway. In terms of biological role, may be part of a complex that binds ubiquitinated proteins and that is necessary for the export of misfolded proteins from the ER to the cytoplasm, where they are degraded by the proteasome. The polypeptide is NPL4-like protein 2 (Arabidopsis thaliana (Mouse-ear cress)).